We begin with the raw amino-acid sequence, 463 residues long: Probable glucan endo-1,3-beta-glucosidase eglC (463 aa).

The N-terminal stretch at 1-18 is a signal peptide; the sequence is MQLTHLLAFALSLATSEA. An N-linked (GlcNAc...) asparagine glycan is attached at N84. E128 serves as the catalytic Proton donor. Residue N183 is glycosylated (N-linked (GlcNAc...) asparagine). E239 functions as the Nucleophile in the catalytic mechanism. The N-linked (GlcNAc...) asparagine glycan is linked to N312. Disordered stretches follow at residues 317–354 and 396–430; these read SASA…SSAV and SGSS…NSGA. Residue G440 is the site of GPI-anchor amidated glycine attachment. The propeptide at 441–463 is removed in mature form; that stretch reads GASSVSGSVFGALVAVFAFVATL.

It belongs to the glycosyl hydrolase 17 family. Post-translationally, the GPI-anchor is attached to the protein in the endoplasmic reticulum and serves to target the protein to the cell surface. There, the glucosamine-inositol phospholipid moiety is cleaved off and the GPI-modified mannoprotein is covalently attached via its lipidless GPI glycan remnant to the 1,6-beta-glucan of the outer cell wall layer.

The protein localises to the cell membrane. Its subcellular location is the secreted. The protein resides in the cell wall. The catalysed reaction is Hydrolysis of (1-&gt;3)-beta-D-glucosidic linkages in (1-&gt;3)-beta-D-glucans.. Functionally, glucanases play a role in cell expansion during growth, in cell-cell fusion during mating, and in spore release during sporulation. This enzyme may be involved in beta-glucan degradation and also function biosynthetically as a transglycosylase. The chain is Probable glucan endo-1,3-beta-glucosidase eglC (eglC) from Aspergillus oryzae (strain ATCC 42149 / RIB 40) (Yellow koji mold).